Here is a 557-residue protein sequence, read N- to C-terminus: Interferon alpha/beta receptor 1 (557 aa).

The signal sequence occupies residues 1 to 27 (MMVVLLGATTLVLVAVAPWVLSAAAGG). Residues 28-436 (KNLKSPQKVE…EKTKPGNTSK (409 aa)) are Extracellular-facing. Fibronectin type-III domains follow at residues 32 to 126 (SPQK…FRKA), 127 to 227 (QIGP…TVEN), 231 to 329 (PPEN…TEIQ), and 331 to 432 (FLLP…TKPG). N-linked (GlcNAc...) asparagine glycans are attached at residues asparagine 50, asparagine 58, asparagine 81, asparagine 88, asparagine 110, and asparagine 172. Cysteine 79 and cysteine 87 form a disulfide bridge. Cysteine 199 and cysteine 220 are joined by a disulfide. A glycan (N-linked (GlcNAc...) asparagine) is linked at asparagine 254. The cysteines at positions 283 and 291 are disulfide-linked. 5 N-linked (GlcNAc...) asparagine glycosylation sites follow: asparagine 313, asparagine 314, asparagine 376, asparagine 416, and asparagine 433. Cysteines 403 and 426 form a disulfide. The helical transmembrane segment at 437–457 (IWLIVGICIALFALPFVIYAA) threads the bilayer. Residues 458-557 (KVFLRCINYV…TSEELQQDFV (100 aa)) are Cytoplasmic-facing. A lipid anchor (S-palmitoyl cysteine) is attached at cysteine 463. Phosphotyrosine; by TYK2 occurs at positions 466 and 481. Residues 491–500 (LLSTSEEQIE) form an important for interaction with TYK2 region. Serine 495 bears the Phosphoserine mark. Residues lysine 501, lysine 525, and lysine 526 each participate in a glycyl lysine isopeptide (Lys-Gly) (interchain with G-Cter in ubiquitin) cross-link. Positions 516-557 (ETNQTDEDHKKYSSQTSQDSGNYSNEDESESKTSEELQQDFV) are disordered. Residues 528 to 539 (SSQTSQDSGNYS) show a composition bias toward polar residues. Serine 535 bears the Phosphoserine mark.

It belongs to the type II cytokine receptor family. Heterodimer with IFNAR2; forming the receptor for type I interferon. Interacts with TYK2. Interacts with STAT1 and STAT2; the interaction requires its phosphorylation at Tyr-466. Interacts (serine-phosphorylated form) with FBXW11, the substrate recognition component of a SCF (SKP1-CUL1-F-box protein) E3 ubiquitin-protein ligase complex. Interacts with SHMT2; this promotes interaction with ABRAXAS2 and the BRISC complex. Interacts with TRIM10; this interaction prevents association between IFNAR1 and TYK2. Post-translationally, ubiquitinated, leading to its internalization and degradation. Polyubiquitinated via 'Lys-48'-linked and 'Lys-63'-linked ubiquitin chains, leading to receptor internalization and lysosomal degradation. The 'Lys-63'-linked ubiquitin chains are cleaved off by the BRISC complex. In terms of processing, phosphorylated on tyrosine residues in response to interferon-binding: phosphorylation by TYK2 tyrosine kinase creates docking sites for STAT proteins. Phosphorylated on serine residues in response to interferon binding; this promotes interaction with FBXW11 and ubiquitination. Palmitoylation at Cys-463 is required for the activation of STAT1 and STAT2. IFN receptors are present in all tissues and even on the surface of most IFN-resistant cells. Isoform 1, isoform 2 and isoform 3 are expressed in the IFN-alpha sensitive myeloma cell line U266B1. Isoform 2 and isoform 3 are expressed in the IFN-alpha resistant myeloma cell line U266R. Isoform 1 is not expressed in IFN-alpha resistant myeloma cell line U266R.

It is found in the cell membrane. It localises to the late endosome. The protein resides in the lysosome. In terms of biological role, together with IFNAR2, forms the heterodimeric receptor for type I interferons (including interferons alpha, beta, epsilon, omega and kappa). Type I interferon binding activates the JAK-STAT signaling cascade, resulting in transcriptional activation or repression of interferon-regulated genes that encode the effectors of the interferon response. Mechanistically, type I interferon-binding brings the IFNAR1 and IFNAR2 subunits into close proximity with one another, driving their associated Janus kinases (JAKs) (TYK2 bound to IFNAR1 and JAK1 bound to IFNAR2) to cross-phosphorylate one another. The activated kinases phosphorylate specific tyrosine residues on the intracellular domains of IFNAR1 and IFNAR2, forming docking sites for the STAT transcription factors. STAT proteins are then phosphorylated by the JAKs, promoting their translocation into the nucleus to regulate expression of interferon-regulated genes. Can also act independently of IFNAR2: form an active IFNB1 receptor by itself and activate a signaling cascade that does not involve activation of the JAK-STAT pathway. This Homo sapiens (Human) protein is Interferon alpha/beta receptor 1 (IFNAR1).